The chain runs to 595 residues: Aspartate--tRNA(Asp/Asn) ligase (595 aa).

An L-aspartate-binding site is contributed by Glu175. The segment at 199-202 (QQYK) is aspartate. L-aspartate-binding residues include Arg221 and His454. 221–223 (RDE) contacts ATP. Residue Glu488 coordinates ATP. Residue Arg495 participates in L-aspartate binding. An ATP-binding site is contributed by 540–543 (GIDR).

The protein belongs to the class-II aminoacyl-tRNA synthetase family. Type 1 subfamily. Homodimer.

Its subcellular location is the cytoplasm. The catalysed reaction is tRNA(Asx) + L-aspartate + ATP = L-aspartyl-tRNA(Asx) + AMP + diphosphate. Aspartyl-tRNA synthetase with relaxed tRNA specificity since it is able to aspartylate not only its cognate tRNA(Asp) but also tRNA(Asn). Reaction proceeds in two steps: L-aspartate is first activated by ATP to form Asp-AMP and then transferred to the acceptor end of tRNA(Asp/Asn). The chain is Aspartate--tRNA(Asp/Asn) ligase from Brucella canis (strain ATCC 23365 / NCTC 10854 / RM-666).